The primary structure comprises 115 residues: Insulin (115 aa).

A signal peptide spans 1–22 (MAALWLQSVSLLVLMLVSWSGS). Disulfide bonds link Cys-32–Cys-101, Cys-44–Cys-114, and Cys-100–Cys-105. Positions 56 to 92 (DVDPLLGFLPAKSGGAAAGGENEVAEFAFKDQMEMMV) are cleaved as a propeptide — c peptide.

This sequence belongs to the insulin family. Heterodimer of a B chain and an A chain linked by two disulfide bonds.

The protein resides in the secreted. In terms of biological role, insulin decreases blood glucose concentration. It increases cell permeability to monosaccharides, amino acids and fatty acids. It accelerates glycolysis, the pentose phosphate cycle, and glycogen synthesis in liver. The polypeptide is Insulin (ins) (Verasper moseri (Barfin flounder)).